Consider the following 270-residue polypeptide: Phosphatidylglycerol--prolipoprotein diacylglyceryl transferase (270 aa).

Helical transmembrane passes span 17–37 (LAIH…MFLG), 63–83 (ILFL…CLFY), and 95–115 (IFYI…VIAS). Arg146 is a binding site for a 1,2-diacyl-sn-glycero-3-phospho-(1'-sn-glycerol). Helical transmembrane passes span 182-202 (SQVY…WLYA), 209-229 (GEVA…AEYF), and 243-263 (MSMG…LWVW).

This sequence belongs to the Lgt family.

It is found in the cell inner membrane. It carries out the reaction L-cysteinyl-[prolipoprotein] + a 1,2-diacyl-sn-glycero-3-phospho-(1'-sn-glycerol) = an S-1,2-diacyl-sn-glyceryl-L-cysteinyl-[prolipoprotein] + sn-glycerol 1-phosphate + H(+). It participates in protein modification; lipoprotein biosynthesis (diacylglyceryl transfer). Functionally, catalyzes the transfer of the diacylglyceryl group from phosphatidylglycerol to the sulfhydryl group of the N-terminal cysteine of a prolipoprotein, the first step in the formation of mature lipoproteins. This chain is Phosphatidylglycerol--prolipoprotein diacylglyceryl transferase, found in Paracidovorax citrulli (strain AAC00-1) (Acidovorax citrulli).